The chain runs to 186 residues: uncharacterized protein (186 aa).

A disordered region spans residues 156–186; that stretch reads DTKELERTTQPPEHQKHHQEPREKRGMNKRD. Over residues 173–186 the composition is skewed to basic and acidic residues; the sequence is HQEPREKRGMNKRD.

This is an uncharacterized protein from Bacillus subtilis (strain 168).